A 459-amino-acid chain; its full sequence is Sperm microtubule associated protein 2-like (459 aa).

Residues 1–138 are disordered; that stretch reads MEEGDFSGSS…QEDGKDDLFP (138 aa). Low complexity predominate over residues 21–30; sequence TTTTTETRTT. The segment covering 47-63 has biased composition (acidic residues); the sequence is NGDEAEAVGEEGQEEDY. Residues 64–73 show a composition bias toward basic and acidic residues; that stretch reads EGSKTHKSHE. The span at 77 to 87 shows a compositional bias: polar residues; sequence SFRSHNSSDPP. Basic and acidic residues-rich tracts occupy residues 91–112 and 127–136; these read KASD…KTSD and ERQEDGKDDL. 8 THEG repeats span residues 172-190, 212-231, 258-277, 291-310, 327-346, 367-386, 403-422, and 440-459; these read KKCF…PKKQ, AALK…PRLV, PALV…PNKF, TTRY…AKGT, STLS…PRIK, AALL…SKRV, AATH…PHTR, and SALK…PIVR.

The chain is Sperm microtubule associated protein 2-like from Mus musculus (Mouse).